A 1287-amino-acid polypeptide reads, in one-letter code: MSGGGGGGGSAPSRFADYFVICGLDTETGLEPDELSALCQYIQASKARDGASPFISSTTEGENFEQTPLRRTFKSKVLARYPENVDWNPFDQDAVGMLCMPKGLAFKTQADPREPQFHAFIITREDGSRTFGFALTFYEEVTSKQICSAMQTLYHMHNAEYDVLHAPLADGGDQSGMEDGEGIPGTKLQRFNSYDISRDTLYVSKCICLITPMSFMKACRSVLQQLHQAVTSPQPPPLPLESYIYNVLYEVPLPPPGRSLKFSGVYGPIICQRPSTNELPLFDFPVKEVFELLGVENVFQLFTCALLEFQILLYSQHYQRLMTVAETITALMFPFQWQHVYVPILPASLLHFLDAPVPYLMGLHSNGLDDRSKLELPQEANLCFVDVDNHFIELPEDLPQFPNKLEFVQEVSEILMAFGVPPEGNLHCSESASKLKRIRASELVSDKKNGNIAGSPLHSYELLKENETIARLQALVKRTGVSLEKLEVREDPSSNKDFKVQCDEEELRIYQLNIQIREVFANRFTQMFADYEVFVIQPSQDKESWLSNREQMQNFDKASFLSDQPEPYLPFLSRFLETQMFASFIDNKIMCHDDDDKDPVLRVFDSRVDKIRLLNVRTPTLRTSMYQKCTTVDEAEKAIELRLAKIDHTAVHPHLLDMKIGQGKYEPGFFPKLQSDVLCTGPASNKWTKRNAPAQWRRKDRQKQHTEHLRLDNDQREKYIQEARNMGSTIRQPKLSNLSPSVIAQTNWKFVEGLLKECRNKTKRMLVEKMGREAVELGHGEVNITGVEENTLIASLCDLLERIWSHGLQVKQGKSALWSHLLHYQENRQRKLTSGSLSTSGILLDSERRKSDASAVMSPLRVSLIQDMRHIQNIGEIKTDVGKARAWVRLSMEKKLLSRHLKQLLSDHELTKKLYKRYAFLRCDDEKEQFLYHLLSFNAVDYFCFTNVFTTILIPYHILIVPSKKLGGSMFTANPWICISGELGETQILQIPRNVLEMTFECQNLGKLTTVQIGHDNSGLYAKWLVEYVMVRNEITGHTYKFPCGRWLGKGMDDGSLERVLVGELLTSLPEVDERPCRTPPLQQSPSVIRRLVTISPNNKPKLNTGQIQESIGEAVNGIVKHFHKPEKERGSLTLLLCGECGLVSALEQAFQHGFKSPRLFKNVFIWDFLEKAQTYYETLEQNDVVPEENWHTRARNFCRFVTAVNNTPRNIGKDGKFQMLVCLGARDHLLHHWIALLADCPITAHMYEDVALIKDHTLVNSLIRVLQTLQEFNITLDTSLVKGIDI.

A uDENN domain is found at 57-259 (STTEGENFEQ…EVPLPPPGRS (203 aa)). Ser193 carries the post-translational modification Phosphoserine. Residues 278–414 (ELPLFDFPVK…LEFVQEVSEI (137 aa)) enclose the cDENN domain. The 183-residue stretch at 416-598 (MAFGVPPEGN…IMCHDDDDKD (183 aa)) folds into the dDENN domain. Residues 787-950 (VEENTLIASL…DYFCFTNVFT (164 aa)) enclose the RUN 1 domain. A PLAT domain is found at 954 to 1062 (IPYHILIVPS…DDGSLERVLV (109 aa)). Thr1079 is modified (phosphothreonine). Phosphoserine is present on residues Ser1085, Ser1087, and Ser1096. An RUN 2 domain is found at 1134-1280 (TLLLCGECGL…QEFNITLDTS (147 aa)).

The protein belongs to the RAB6IP1 family. In terms of assembly, interacts with RAB6A bound to GTP. As to expression, expressed in developing brain and developing neurons.

The protein resides in the golgi apparatus membrane. Functionally, guanine nucleotide exchange factor (GEF) which may activate RAB6A and RAB39A and/or RAB39B. Promotes the exchange of GDP to GTP, converting inactive GDP-bound Rab proteins into their active GTP-bound form. Involved in the negative regulation of neurite outgrowth. The protein is DENN domain-containing protein 5A (Dennd5a) of Rattus norvegicus (Rat).